Reading from the N-terminus, the 955-residue chain is MNNKKTVTNRKGMIPNRLNKFSIRKYSVGTASILVGTTLIFGLSGHEAKAAEHTNGELNQSKNETTAPSENKTTEKVDSHQLKDNTQTATADQPKVTMSDSATFKETSSNMQSPQNATASQSTTQTSNVTTNDKSSTTYSNETDKSNLTQAKDVSATPKTTTIKPRTLNRMAVNTVAAPQQGTNVNDKVHFSNIDIAIDKGHLNKDTGKTEFWATSSDVLKLKANYTIDDSVKEGDTFTFKYGQYFRPGSVRLPSQTQNLYNAQGNIIAKGIYDSTTNTTTYTFTNYVDQYTNVSGSFEQVAFAKRENATTDKTAYKMEVSLGNDTYSEEIIVDYGNKKAQPLISSTNYINNEDLSRNMTAYVNQPKNTYTKQTFVTNLTGYKFNPNAKNFKIYEVTDQNQFVDSFTPDTSKLKDVTNQFNITYSNDNKTATVDLMNGQTSSNKQYIIQQVAYPDNTSTDNGKIDYTLDTDKTKYSWSNSYSNVNGSSTANGDQKKYNLGDYVWEDTNKDGKQDANEKGIKGVYVILKDSNGKELDRTTTDENGKYQFTGLSNGTYSVEFSTPAGYTPTTANAGTDDAVDSDGLTTTGVIKDADNMTLDSGFYKTPKYSLGDYVWYDSNKDGKQDSTEKGIKGVKVTLQNEKGEVIGTTETDENGKYRFDNLDSGKYKVIFEKPAGLTQTGTNTTEDDKDADGGEVDVTITDHDDFTLDNGYYEEETSDSDSDSDSDSDSDSDSDSDSDSDSDSDSDSDSDSDSDSDSDSDSDSDSDSDSDSDSDSDSDSDSDSDSDSDSDSDSDSDSDSDSDSDSDSDSDSDSDSDSDSDSDSDSDSDSDTDSDSDSDSDSDSDSDSDSDSDSDSDSDSDSDSDSDSDSDSDSDSDSDSDSESDADSDTDSDSDAGKHTPAKPMSTVKDQHKTAKALPETGSENNNSNNGTLFGGLFAALGSLLLFGRRKKQNK.

The signal sequence occupies residues 1-50 (MNNKKTVTNRKGMIPNRLNKFSIRKYSVGTASILVGTTLIFGLSGHEAKA). The segment at 51–166 (AEHTNGELNQ…TPKTTTIKPR (116 aa)) is disordered. Positions 51–495 (AEHTNGELNQ…GSSTANGDQK (445 aa)) are ligand binding A region. Over residues 56-71 (GELNQSKNETTAPSEN) the composition is skewed to polar residues. The segment covering 72-83 (KTTEKVDSHQLK) has biased composition (basic and acidic residues). A compositionally biased stretch (polar residues) spans 84–114 (DNTQTATADQPKVTMSDSATFKETSSNMQSP). Residues 115-132 (QNATASQSTTQTSNVTTN) are compositionally biased toward low complexity. Residues 133 to 164 (DKSSTTYSNETDKSNLTQAKDVSATPKTTTIK) are compositionally biased toward polar residues. 2 consecutive CNA-B domains span residues 496-606 (KYNL…YKTP) and 607-717 (KYSL…EEET). Residues 678-935 (TQTGTNTTED…NNSNNGTLFG (258 aa)) are disordered. Composition is skewed to acidic residues over residues 685–695 (TEDDKDADGGE) and 712–894 (YYEE…DSDS). The LPXTG sorting signal signature appears at 918 to 922 (LPETG). The segment covering 920 to 935 (ETGSENNNSNNGTLFG) has biased composition (low complexity). Thr921 carries the pentaglycyl murein peptidoglycan amidated threonine modification. The propeptide at 922 to 955 (GSENNNSNNGTLFGGLFAALGSLLLFGRRKKQNK) is removed by sortase.

It belongs to the serine-aspartate repeat-containing protein (SDr) family. As to quaternary structure, homodimerizes; via N2-Domain. Interacts with host NRXN1; this interaction mediates bacterial attachment to host cells.

It is found in the secreted. The protein localises to the cell wall. In terms of biological role, cell surface-associated calcium-binding protein which plays an important role in adhesion and pathogenesis. Mediates interactions with components of the extracellular matrix such as host NRXN1 to promote bacterial adhesion. The chain is Serine-aspartate repeat-containing protein C (sdrC) from Staphylococcus aureus (strain MW2).